Consider the following 261-residue polypeptide: Kallikrein 1-related peptidase b5 (261 aa).

The signal sequence occupies residues 1-18 (MWFLILFLALSLGGIDAA). A propeptide spans 19 to 24 (PPVQSR) (activation peptide). The Peptidase S1 domain maps to 25–258 (IFGGFNCEKN…FNSWIKDTIA (234 aa)). Intrachain disulfides connect Cys-31–Cys-173, Cys-50–Cys-66, Cys-152–Cys-219, Cys-184–Cys-198, and Cys-209–Cys-234. His-65 serves as the catalytic Charge relay system. A glycan (N-linked (GlcNAc...) asparagine) is linked at Asn-102. Asp-120 serves as the catalytic Charge relay system. Ser-213 functions as the Charge relay system in the catalytic mechanism.

The protein belongs to the peptidase S1 family. Kallikrein subfamily.

The enzyme catalyses Preferential cleavage of Arg-|-Xaa bonds in small molecule substrates. Highly selective action to release kallidin (lysyl-bradykinin) from kininogen involves hydrolysis of Met-|-Xaa or Leu-|-Xaa.. Its function is as follows. Glandular kallikreins cleave Met-Lys and Arg-Ser bonds in kininogen to release Lys-bradykinin. In Mus musculus (Mouse), this protein is Kallikrein 1-related peptidase b5 (Klk1b5).